Consider the following 341-residue polypeptide: Serpentine receptor class epsilon-12 (341 aa).

7 consecutive transmembrane segments (helical) span residues 30-50 (TAFY…LFSA), 57-77 (FTLV…AIIV), 101-121 (AMTF…FSIL), 140-160 (YISY…AILL), 167-187 (IFVV…NQFL), 230-250 (LNFI…SVLF), and 262-282 (ICSL…PQIM).

It belongs to the nematode receptor-like protein sre family.

Its subcellular location is the membrane. The chain is Serpentine receptor class epsilon-12 (sre-12) from Caenorhabditis elegans.